Here is a 161-residue protein sequence, read N- to C-terminus: Endoribonuclease YbeY (161 aa).

3 residues coordinate Zn(2+): His121, His125, and His131.

Belongs to the endoribonuclease YbeY family. Zn(2+) is required as a cofactor.

It is found in the cytoplasm. Functionally, single strand-specific metallo-endoribonuclease involved in late-stage 70S ribosome quality control and in maturation of the 3' terminus of the 16S rRNA. The polypeptide is Endoribonuclease YbeY (Xanthomonas oryzae pv. oryzae (strain MAFF 311018)).